The sequence spans 82 residues: Small ribosomal subunit protein eS27 (82 aa).

Residues Cys-37, Cys-40, Cys-56, and Cys-59 each contribute to the Zn(2+) site.

Belongs to the eukaryotic ribosomal protein eS27 family. In terms of assembly, component of the small ribosomal subunit. Mature ribosomes consist of a small (40S) and a large (60S) subunit. The 40S subunit contains about 32 different proteins and 1 molecule of RNA (18S). The 60S subunit contains 45 different proteins and 3 molecules of RNA (25S, 5.8S and 5S). The cofactor is Zn(2+).

The protein localises to the cytoplasm. Functionally, component of the ribosome, a large ribonucleoprotein complex responsible for the synthesis of proteins in the cell. The small ribosomal subunit (SSU) binds messenger RNAs (mRNAs) and translates the encoded message by selecting cognate aminoacyl-transfer RNA (tRNA) molecules. The large subunit (LSU) contains the ribosomal catalytic site termed the peptidyl transferase center (PTC), which catalyzes the formation of peptide bonds, thereby polymerizing the amino acids delivered by tRNAs into a polypeptide chain. The nascent polypeptides leave the ribosome through a tunnel in the LSU and interact with protein factors that function in enzymatic processing, targeting, and the membrane insertion of nascent chains at the exit of the ribosomal tunnel. This is Small ribosomal subunit protein eS27 (RPS27) from Candida albicans (strain SC5314 / ATCC MYA-2876) (Yeast).